Here is an 89-residue protein sequence, read N- to C-terminus: MAEENIIFVGKKPTMNYVLAVVTQFNNNANKIIIKARGKTISKAVDVAEITRHKFIPDAKYEEIKLDTETLQGERGSSNVSSIEITLSR.

An N6-acetyllysine modification is found at lysine 11.

This sequence belongs to the histone-like Alba family. Post-translationally, acetylated. Acetylation at Lys-11 decreases DNA-binding affinity.

The protein localises to the cytoplasm. The protein resides in the chromosome. Binds double-stranded DNA tightly but without sequence specificity. Involved in DNA compaction. This is DNA/RNA-binding protein Alba from Thermoplasma acidophilum (strain ATCC 25905 / DSM 1728 / JCM 9062 / NBRC 15155 / AMRC-C165).